The primary structure comprises 259 residues: Anti-Pycsar protein Apyc1 (259 aa).

Residues 21–233 form a beta-lactamase-like region; sequence YNNSALVTFT…KQQNKIFLMH (213 aa). 7 residues coordinate Zn(2+): His64, His66, Asp68, His69, His154, Asp178, and His233.

It belongs to the anti-Pycsar protein Apyc1 family. As to quaternary structure, homodimer. It depends on Zn(2+) as a cofactor.

The catalysed reaction is 3',5'-cyclic CMP + H2O = CMP + H(+). The enzyme catalyses 3',5'-cyclic UMP + H2O = UMP + H(+). Functionally, counteracts the host Pycsar antiviral defense system. Phosphodiesterase that enables metal-dependent hydrolysis of host cyclic nucleotide Pycsar defense signals such as cCMP and cUMP. This Bacillus phage vB_BveM-Goe7 protein is Anti-Pycsar protein Apyc1.